A 331-amino-acid polypeptide reads, in one-letter code: Adenosine deaminase (331 aa).

Residues histidine 12 and histidine 14 each contribute to the Zn(2+) site. 3 residues coordinate substrate: histidine 14, aspartate 16, and glycine 170. Histidine 197 contributes to the Zn(2+) binding site. The active-site Proton donor is the glutamate 200. Residue aspartate 278 participates in Zn(2+) binding. Substrate is bound at residue aspartate 279.

This sequence belongs to the metallo-dependent hydrolases superfamily. Adenosine and AMP deaminases family. Adenosine deaminase subfamily. Zn(2+) serves as cofactor.

It catalyses the reaction adenosine + H2O + H(+) = inosine + NH4(+). It carries out the reaction 2'-deoxyadenosine + H2O + H(+) = 2'-deoxyinosine + NH4(+). In terms of biological role, catalyzes the hydrolytic deamination of adenosine and 2-deoxyadenosine. The chain is Adenosine deaminase from Shewanella baltica (strain OS223).